We begin with the raw amino-acid sequence, 519 residues long: Maturase K (519 aa).

The protein belongs to the intron maturase 2 family. MatK subfamily.

The protein localises to the plastid. Its subcellular location is the chloroplast. Usually encoded in the trnK tRNA gene intron. Probably assists in splicing its own and other chloroplast group II introns. This Aesculus pavia (Red buckeye) protein is Maturase K.